The chain runs to 135 residues: Transcription antitermination protein NusB (135 aa).

It belongs to the NusB family.

Functionally, involved in transcription antitermination. Required for transcription of ribosomal RNA (rRNA) genes. Binds specifically to the boxA antiterminator sequence of the ribosomal RNA (rrn) operons. In Lacticaseibacillus casei (strain BL23) (Lactobacillus casei), this protein is Transcription antitermination protein NusB.